A 105-amino-acid chain; its full sequence is Large ribosomal subunit protein bL21 (105 aa).

Belongs to the bacterial ribosomal protein bL21 family. As to quaternary structure, part of the 50S ribosomal subunit. Contacts protein L20.

This protein binds to 23S rRNA in the presence of protein L20. This Bacteroides fragilis (strain YCH46) protein is Large ribosomal subunit protein bL21.